An 879-amino-acid chain; its full sequence is Bifunctional uridylyltransferase/uridylyl-removing enzyme (879 aa).

A uridylyltransferase region spans residues 1–340; that stretch reads MANVQEDKDF…GTQDLQHAEH (340 aa). The interval 341-700 is uridylyl-removing; the sequence is ISDDFAVANK…IGDENNYGTT (360 aa). Residues 458-580 enclose the HD domain; that stretch reads VDEHTFRLVR…VSTPERLDYL (123 aa). ACT domains lie at 701 to 782 and 809 to 879; these read ELFI…STKR and TFEL…DLEF.

The protein belongs to the GlnD family. The cofactor is Mg(2+).

It carries out the reaction [protein-PII]-L-tyrosine + UTP = [protein-PII]-uridylyl-L-tyrosine + diphosphate. The enzyme catalyses [protein-PII]-uridylyl-L-tyrosine + H2O = [protein-PII]-L-tyrosine + UMP + H(+). Uridylyltransferase (UTase) activity is inhibited by glutamine, while glutamine activates uridylyl-removing (UR) activity. In terms of biological role, modifies, by uridylylation and deuridylylation, the PII regulatory proteins (GlnB and homologs), in response to the nitrogen status of the cell that GlnD senses through the glutamine level. Under low glutamine levels, catalyzes the conversion of the PII proteins and UTP to PII-UMP and PPi, while under higher glutamine levels, GlnD hydrolyzes PII-UMP to PII and UMP (deuridylylation). Thus, controls uridylylation state and activity of the PII proteins, and plays an important role in the regulation of nitrogen assimilation and metabolism. The protein is Bifunctional uridylyltransferase/uridylyl-removing enzyme of Idiomarina loihiensis (strain ATCC BAA-735 / DSM 15497 / L2-TR).